An 89-amino-acid polypeptide reads, in one-letter code: Co-chaperonin GroES (89 aa).

It belongs to the GroES chaperonin family. In terms of assembly, heptamer of 7 subunits arranged in a ring. Interacts with the chaperonin GroEL.

The protein localises to the cytoplasm. Functionally, together with the chaperonin GroEL, plays an essential role in assisting protein folding. The GroEL-GroES system forms a nano-cage that allows encapsulation of the non-native substrate proteins and provides a physical environment optimized to promote and accelerate protein folding. GroES binds to the apical surface of the GroEL ring, thereby capping the opening of the GroEL channel. The protein is Co-chaperonin GroES of Wolinella succinogenes (strain ATCC 29543 / DSM 1740 / CCUG 13145 / JCM 31913 / LMG 7466 / NCTC 11488 / FDC 602W) (Vibrio succinogenes).